The sequence spans 309 residues: tRNA dimethylallyltransferase (309 aa).

8–15 (GPTATGKS) provides a ligand contact to ATP. Residue 10–15 (TATGKS) participates in substrate binding. Positions 33–36 (DSRQ) are interaction with substrate tRNA.

The protein belongs to the IPP transferase family. In terms of assembly, monomer. Requires Mg(2+) as cofactor.

It catalyses the reaction adenosine(37) in tRNA + dimethylallyl diphosphate = N(6)-dimethylallyladenosine(37) in tRNA + diphosphate. Its function is as follows. Catalyzes the transfer of a dimethylallyl group onto the adenine at position 37 in tRNAs that read codons beginning with uridine, leading to the formation of N6-(dimethylallyl)adenosine (i(6)A). This is tRNA dimethylallyltransferase from Trichodesmium erythraeum (strain IMS101).